A 534-amino-acid chain; its full sequence is Kelch repeat and BTB domain-containing protein 4 (534 aa).

The disordered stretch occupies residues 1-25 (MKGGNADSWQREKLASMESPEEPGA). The region spanning 61–128 (ADVTISVEGR…IYHGTVKLRA (68 aa)) is the BTB domain. The BACK domain occupies 163–255 (CLQVMWLADR…SLKEIGENVH (93 aa)). Kelch repeat units follow at residues 255 to 301 (HIYL…KHGG), 302 to 344 (DLYV…SVPG), 347 to 394 (AIYS…NLNG), 396 to 446 (IYLL…VHKD), and 448 to 497 (VFIV…VFRD).

As to quaternary structure, component of the BCR(KBTBD4) E3 ubiquitin ligase complex, at least composed of CUL3, KBTBD4 and RBX1.

Functionally, substrate-specific adapter of a BCR (BTB-CUL3-RBX1) E3 ubiquitin ligase complex which targets CoREST corepressor complex components RCOR1, KDM1A/LSD1 and HDAC2 for proteasomal degradation. RCOR1 is likely to be the primary target while degradation of KDM1A and HDAC2 is likely due to their association with RCOR1. Also targets RCOR3, MIER2 and MIER3 for proteasomal degradation as well as associated proteins ZNF217 and RREB1. Degradation is dependent on the presence of an ELM2 domain in the target proteins. The protein is Kelch repeat and BTB domain-containing protein 4 (KBTBD4) of Homo sapiens (Human).